Consider the following 216-residue polypeptide: Deoxyribose-phosphate aldolase (216 aa).

Asp-89 functions as the Proton donor/acceptor in the catalytic mechanism. Catalysis depends on Lys-153, which acts as the Schiff-base intermediate with acetaldehyde. The Proton donor/acceptor role is filled by Lys-182.

Belongs to the DeoC/FbaB aldolase family. DeoC type 1 subfamily.

It is found in the cytoplasm. It catalyses the reaction 2-deoxy-D-ribose 5-phosphate = D-glyceraldehyde 3-phosphate + acetaldehyde. Its pathway is carbohydrate degradation; 2-deoxy-D-ribose 1-phosphate degradation; D-glyceraldehyde 3-phosphate and acetaldehyde from 2-deoxy-alpha-D-ribose 1-phosphate: step 2/2. Catalyzes a reversible aldol reaction between acetaldehyde and D-glyceraldehyde 3-phosphate to generate 2-deoxy-D-ribose 5-phosphate. The sequence is that of Deoxyribose-phosphate aldolase from Treponema denticola (strain ATCC 35405 / DSM 14222 / CIP 103919 / JCM 8153 / KCTC 15104).